Here is a 194-residue protein sequence, read N- to C-terminus: dTTP/UTP pyrophosphatase (194 aa).

Asp68 serves as the catalytic Proton acceptor.

Belongs to the Maf family. YhdE subfamily. It depends on a divalent metal cation as a cofactor.

It localises to the cytoplasm. The enzyme catalyses dTTP + H2O = dTMP + diphosphate + H(+). It carries out the reaction UTP + H2O = UMP + diphosphate + H(+). Nucleoside triphosphate pyrophosphatase that hydrolyzes dTTP and UTP. May have a dual role in cell division arrest and in preventing the incorporation of modified nucleotides into cellular nucleic acids. In Clostridioides difficile (strain 630) (Peptoclostridium difficile), this protein is dTTP/UTP pyrophosphatase.